The sequence spans 139 residues: ATP synthase epsilon chain (139 aa).

The protein belongs to the ATPase epsilon chain family. In terms of assembly, F-type ATPases have 2 components, CF(1) - the catalytic core - and CF(0) - the membrane proton channel. CF(1) has five subunits: alpha(3), beta(3), gamma(1), delta(1), epsilon(1). CF(0) has three main subunits: a, b and c.

It localises to the cell inner membrane. Functionally, produces ATP from ADP in the presence of a proton gradient across the membrane. This is ATP synthase epsilon chain from Nitrosospira multiformis (strain ATCC 25196 / NCIMB 11849 / C 71).